The chain runs to 129 residues: Protein RALF-like 34 (129 aa).

A signal peptide spans 1–23 (MAASSLNLLLILSLLTFISLQRS). A propeptide spans 24–76 (ESLSDNPSLTLLPDGFDWPISHSDEFDIIDGEESFEVTEEDDGVTDRRSLYWR) (removed in mature form). Disulfide bonds link Cys-94–Cys-107 and Cys-121–Cys-127.

This sequence belongs to the plant rapid alkalinization factor (RALF) family. Proteolytically cleaved, probably by S1P, a subtilisin-like serine protease (subtilase). As to expression, expressed in roots, stems and leaves.

Its subcellular location is the secreted. Its function is as follows. Cell signaling peptide that may regulate plant stress, growth, and development. Mediates a rapid alkalinization of extracellular space by mediating a transient increase in the cytoplasmic Ca(2+) concentration leading to a calcium-dependent signaling events through a cell surface receptor and a concomitant activation of some intracellular mitogen-activated protein kinases. The chain is Protein RALF-like 34 (RALFL34) from Arabidopsis thaliana (Mouse-ear cress).